Here is a 136-residue protein sequence, read N- to C-terminus: Heme-binding protein Rv0203 (136 aa).

Positions 1 to 27 (MKTGTATTRRRLLAVLIALALPGAAVA) are cleaved as a signal peptide. The cysteines at positions 41 and 115 are disulfide-linked. Heme contacts are provided by tyrosine 60, histidine 64, and histidine 90.

In terms of assembly, dimer of dimers.

It localises to the secreted. Its function is as follows. Part of a heme-iron acquisition system. Acts by binding heme and delivering it to the membrane proteins MmpL3 and MmpL11. Can use free heme or heme from host hemoglobin. This chain is Heme-binding protein Rv0203, found in Mycobacterium tuberculosis (strain ATCC 25618 / H37Rv).